Reading from the N-terminus, the 470-residue chain is Nitric oxide synthase, inducible (470 aa).

Positions 2, 3, and 7 each coordinate L-arginine. (6R)-L-erythro-5,6,7,8-tetrahydrobiopterin contacts are provided by R11, W93, and F106. Y121 provides a ligand contact to heme b. Residues 145–165 form a calmodulin-binding region; sequence FKAVARAALFSSTLMSRVLAN. The 139-residue stretch at 169–307 folds into the Flavodoxin-like domain; that stretch reads CTVLYATETG…AFSAWALTAL (139 aa). FMN is bound by residues T175, E176, T177, K179, S180, S221, T222, S258, C265, E291, and Q295. R380 provides a ligand contact to NADP(+). H403 serves as a coordination point for FAD. An NADP(+)-binding site is contributed by T440.

Belongs to the NOS family. As to quaternary structure, homodimer. The cofactor is heme b. It depends on FAD as a cofactor. FMN serves as cofactor. Requires (6R)-L-erythro-5,6,7,8-tetrahydrobiopterin as cofactor.

It is found in the cytoplasm. The protein localises to the cytosol. It carries out the reaction 2 L-arginine + 3 NADPH + 4 O2 + H(+) = 2 L-citrulline + 2 nitric oxide + 3 NADP(+) + 4 H2O. With respect to regulation, not stimulated by calcium/calmodulin. Produces nitric oxide (NO) which is a messenger molecule with diverse functions throughout the body. In macrophages, NO mediates tumoricidal and bactericidal actions. Also has nitrosylase activity and mediates cysteine S-nitrosylation of cytoplasmic target proteins such COX2. The sequence is that of Nitric oxide synthase, inducible (nos2) from Oncorhynchus mykiss (Rainbow trout).